Here is a 151-residue protein sequence, read N- to C-terminus: Putative superoxide dismutase [Cu-Zn] (151 aa).

Residues His43, His45, and His60 each coordinate Cu cation. The cysteines at positions 54 and 144 are disulfide-linked. Positions 60, 68, 77, and 80 each coordinate Zn(2+). Position 118 (His118) interacts with Cu cation.

The protein belongs to the Cu-Zn superoxide dismutase family. It depends on Cu cation as a cofactor. Requires Zn(2+) as cofactor.

It carries out the reaction 2 superoxide + 2 H(+) = H2O2 + O2. Its function is as follows. Nonessential for normal virus replication. Could be either non-functional or with a low activity. In Lepidoptera (butterflies and moths), this protein is Putative superoxide dismutase [Cu-Zn] (SOD).